The sequence spans 212 residues: Uridine kinase (212 aa).

An ATP-binding site is contributed by 13–20; sequence GASASGKS.

It belongs to the uridine kinase family.

It localises to the cytoplasm. The catalysed reaction is uridine + ATP = UMP + ADP + H(+). It catalyses the reaction cytidine + ATP = CMP + ADP + H(+). It functions in the pathway pyrimidine metabolism; CTP biosynthesis via salvage pathway; CTP from cytidine: step 1/3. It participates in pyrimidine metabolism; UMP biosynthesis via salvage pathway; UMP from uridine: step 1/1. In Shewanella baltica (strain OS155 / ATCC BAA-1091), this protein is Uridine kinase.